The following is a 561-amino-acid chain: Probable xyloglucan galactosyltransferase GT20 (561 aa).

Over 1-31 the chain is Cytoplasmic; sequence MVSKRKSRTSKTIEDSCIHLCSVFFRFLYYT. The chain crosses the membrane as a helical; Signal-anchor for type II membrane protein span at residues 32–52; it reads LPALFLFFFLLYLCLSFTTGI. The Lumenal portion of the chain corresponds to 53–561; the sequence is SYNNFHMCIF…LLKKINRSVV (509 aa). N-linked (GlcNAc...) asparagine glycosylation is found at Asn-87, Asn-253, Asn-277, Asn-418, Asn-421, and Asn-557.

This sequence belongs to the glycosyltransferase 47 family. Expressed in hydathodes.

The protein localises to the golgi apparatus membrane. Functionally, functions in xyloglucan synthesis by adding side chains to the xylosylated glucan backbone. Involved in the galactosylation of hemicellulose xyloglucan. This is Probable xyloglucan galactosyltransferase GT20 from Arabidopsis thaliana (Mouse-ear cress).